A 501-amino-acid polypeptide reads, in one-letter code: Ribose import ATP-binding protein RbsA (501 aa).

ABC transporter domains lie at 5–241 and 252–495; these read LQLK…VGRK and APGE…VGKL. Position 37–44 (37–44) interacts with ATP; that stretch reads GENGAGKS.

This sequence belongs to the ABC transporter superfamily. Ribose importer (TC 3.A.1.2.1) family. As to quaternary structure, the complex is composed of an ATP-binding protein (RbsA), two transmembrane proteins (RbsC) and a solute-binding protein (RbsB).

The protein localises to the cell inner membrane. It carries out the reaction D-ribose(out) + ATP + H2O = D-ribose(in) + ADP + phosphate + H(+). Part of the ABC transporter complex RbsABC involved in ribose import. Responsible for energy coupling to the transport system. The sequence is that of Ribose import ATP-binding protein RbsA from Salmonella typhi.